A 167-amino-acid polypeptide reads, in one-letter code: Modulator of smoothened protein (167 aa).

Transmembrane regions (helical) follow at residues 7–29 (ISGC…PDWI), 68–88 (TLFF…LLVI), 101–121 (WIAF…PVGF), and 139–159 (VGSS…GLLF).

It localises to the cell projection. The protein resides in the cilium membrane. The protein localises to the cell membrane. Its function is as follows. Acts as a negative regulator of hedgehog signaling probably by promoting internalization and subsequent degradation of smoothened protein (SMO) present in the ciliary membrane. Plays a role in sonic hedgehog (SHH)-induced spinal neural progenitor cells differentiation. This Danio rerio (Zebrafish) protein is Modulator of smoothened protein.